A 730-amino-acid chain; its full sequence is Elongation factor 2 (730 aa).

Residues 18–238 (DQIRNFGVIA…YSEGKVDELV (221 aa)) enclose the tr-type G domain. GTP is bound by residues 27 to 34 (AHVDHGKT), 93 to 97 (DTPGH), and 147 to 150 (NKVD). His-595 is subject to Diphthamide. The segment at 711-730 (RKRKGLAPDPPTVSEFIDRE) is disordered.

Belongs to the TRAFAC class translation factor GTPase superfamily. Classic translation factor GTPase family. EF-G/EF-2 subfamily.

Its subcellular location is the cytoplasm. In terms of biological role, catalyzes the GTP-dependent ribosomal translocation step during translation elongation. During this step, the ribosome changes from the pre-translocational (PRE) to the post-translocational (POST) state as the newly formed A-site-bound peptidyl-tRNA and P-site-bound deacylated tRNA move to the P and E sites, respectively. Catalyzes the coordinated movement of the two tRNA molecules, the mRNA and conformational changes in the ribosome. This is Elongation factor 2 from Cenarchaeum symbiosum (strain A).